The chain runs to 263 residues: Hydroxyethylthiazole kinase 1 (263 aa).

Substrate is bound at residue Met42. The ATP site is built by Lys118 and Thr164. Gly191 is a binding site for substrate.

Belongs to the Thz kinase family. The cofactor is Mg(2+).

It catalyses the reaction 5-(2-hydroxyethyl)-4-methylthiazole + ATP = 4-methyl-5-(2-phosphooxyethyl)-thiazole + ADP + H(+). It participates in cofactor biosynthesis; thiamine diphosphate biosynthesis; 4-methyl-5-(2-phosphoethyl)-thiazole from 5-(2-hydroxyethyl)-4-methylthiazole: step 1/1. Catalyzes the phosphorylation of the hydroxyl group of 4-methyl-5-beta-hydroxyethylthiazole (THZ). The polypeptide is Hydroxyethylthiazole kinase 1 (Clostridium botulinum (strain Okra / Type B1)).